A 439-amino-acid chain; its full sequence is Structure-specific endonuclease subunit SLX1 homolog (439 aa).

Disordered stretches follow at residues 1–28 (METFILSSDSDDDCPPPPKRRSIEGVPK) and 117–140 (DDDDDDEKESSTEHADDDLNLRAL). Positions 125–136 (ESSTEHADDDLN) are enriched in basic and acidic residues. A GIY-YIG domain is found at 166 to 253 (EFYGVYCLIS…PAVSKSLKEK (88 aa)). An SLX1-type zinc finger spans residues 335-390 (CRLCGKDIEKLWGLVRCISQSCHSHFHSKCLAEHGLKNKNEYADQIYPLKSNCPIC).

It belongs to the SLX1 family. In terms of assembly, forms a heterodimer with him-18/slx-4. The cofactor is a divalent metal cation.

The protein resides in the nucleus. Its function is as follows. Catalytic subunit of a heterodimeric structure-specific endonuclease that resolves DNA secondary structures generated during DNA repair and recombination. Has endonuclease activity towards branched DNA substrates, introducing single-strand cuts in duplex DNA close to junctions with ss-DNA (Potential). Has a preference for replication forks over 5' flap structures or Holliday junctions and shows much lower activity toward 3' flap structures. Required for proper crossover distribution through inhibition of crossover formation at the central region of chromosomes. This chain is Structure-specific endonuclease subunit SLX1 homolog, found in Caenorhabditis briggsae.